Consider the following 282-residue polypeptide: Mitochondrial outer membrane protein porin (282 aa).

It belongs to the eukaryotic mitochondrial porin family.

Its subcellular location is the mitochondrion outer membrane. Its function is as follows. Forms a channel through the cell membrane that allows diffusion of small hydrophilic molecules. The channel adopts an open conformation at low or zero membrane potential and a closed conformation at potentials above 30-40 mV. The open state has a weak anion selectivity whereas the closed state is cation-selective. In Candida albicans (strain SC5314 / ATCC MYA-2876) (Yeast), this protein is Mitochondrial outer membrane protein porin (POR1).